The chain runs to 306 residues: 1-aminocyclopropane-1-carboxylate oxidase (306 aa).

The 101-residue stretch at 153-253 folds into the Fe2OG dioxygenase domain; the sequence is PFFGTKVSHY…RRSIASFYNP (101 aa). Fe cation contacts are provided by H177, D179, and H234.

This sequence belongs to the iron/ascorbate-dependent oxidoreductase family. Fe cation serves as cofactor.

The enzyme catalyses 1-aminocyclopropane-1-carboxylate + L-ascorbate + O2 = ethene + L-dehydroascorbate + hydrogen cyanide + CO2 + 2 H2O. The protein operates within alkene biosynthesis; ethylene biosynthesis via S-adenosyl-L-methionine; ethylene from S-adenosyl-L-methionine: step 2/2. The chain is 1-aminocyclopropane-1-carboxylate oxidase (MAO1B) from Musa acuminata (Banana).